A 750-amino-acid chain; its full sequence is Elastin (750 aa).

Residues 1–24 form the signal peptide; that stretch reads ARQAAAPLLPGVLLLFSILPASQQ. 7 positions are modified to 4-hydroxyproline: Pro32, Pro67, Pro102, Pro176, Pro189, Pro192, and Pro211. Residues 83-127 form repeat 1; sequence GAGVGGLGAGLGAFPGAAFPGAASAAALKAAAKAGAGLGGVGGIG. The interval 83 to 686 is 8 X tandem repeats; that stretch reads GAGVGGLGAG…GVGGLGVGGL (604 aa). 7 repeat units span residues 219 to 262, 263 to 318, 319 to 393, 394 to 482, 483 to 554, 555 to 619, and 620 to 686. A 4-hydroxyproline mark is found at Pro276, Pro345, Pro363, Pro368, Pro441, Pro455, and Pro480. 4-hydroxyproline is present on residues Pro576, Pro635, and Pro720. Residues Cys739 and Cys745 are joined by a disulfide bond.

This sequence belongs to the elastin family. In terms of assembly, the polymeric elastin chains are cross-linked together into an extensible 3D network. In terms of processing, elastin is formed through the cross-linking of its soluble precursor tropoelastin. Cross-linking is initiated through the action of lysyl oxidase on exposed lysines to form allysine. Subsequent spontaneous condensation reactions with other allysine or unmodified lysine residues result in various bi-, tri-, and tetrafunctional cross-links. The most abundant cross-links in mature elastin fibers are lysinonorleucine, allysine aldol, desmosine, and isodesmosine. Hydroxylated on proline residues. Post-translationally, hydroxylation on proline residues within the sequence motif, GXPG, is most likely to be 4-hydroxy as this fits the requirement for 4-hydroxylation in vertebrates.

It localises to the secreted. The protein localises to the extracellular space. The protein resides in the extracellular matrix. Its function is as follows. Major structural protein of tissues such as aorta and nuchal ligament, which must expand rapidly and recover completely. This is Elastin (ELN) from Gallus gallus (Chicken).